Consider the following 228-residue polypeptide: Heptaprenylglyceryl phosphate synthase (228 aa).

Position 12 (Lys12) interacts with sn-glycerol 1-phosphate. Asp14 and Ser40 together coordinate Mg(2+). Residues 158–163, Gly188, and 208–209 contribute to the sn-glycerol 1-phosphate site; these read YLEYSG and GN.

This sequence belongs to the GGGP/HepGP synthase family. Group I subfamily. As to quaternary structure, homodimer. The cofactor is Mg(2+).

It carries out the reaction sn-glycerol 1-phosphate + all-trans-heptaprenyl diphosphate = 3-heptaprenyl-sn-glycero-1-phosphate + diphosphate. Its pathway is membrane lipid metabolism; glycerophospholipid metabolism. Functionally, prenyltransferase that catalyzes in vivo the transfer of the heptaprenyl moiety of heptaprenyl pyrophosphate (HepPP; 35 carbon atoms) to the C3 hydroxyl of sn-glycerol-1-phosphate (G1P), producing heptaprenylglyceryl phosphate (HepGP). This reaction is an ether-bond-formation step in the biosynthesis of archaea-type G1P-based membrane lipids found in Bacillales. To a much lesser extent, is also able to use geranyl diphosphate (GPP; C10) and geranylgeranyl diphosphate (GGPP; C20) as the prenyl donors, but not farnesyl pyrophosphate (FPP; C15). Cannot use glycerol-3-phosphate (G3P) or 3-phosphoglycerate (3PG) as an acceptor. This chain is Heptaprenylglyceryl phosphate synthase, found in Bacillus subtilis (strain 168).